The following is a 423-amino-acid chain: 26S proteasome regulatory subunit 6A homolog (423 aa).

211 to 218 (GPPGTGKT) serves as a coordination point for ATP.

This sequence belongs to the AAA ATPase family.

The protein localises to the cytoplasm. It is found in the nucleus. The 26S proteasome is involved in the ATP-dependent degradation of ubiquitinated proteins. The regulatory (or ATPase) complex confers ATP dependency and substrate specificity to the 26S complex. The sequence is that of 26S proteasome regulatory subunit 6A homolog (TBP1) from Solanum lycopersicum (Tomato).